The following is a 132-amino-acid chain: MPEAKPGLQLELLELLLVGAGAVPGALLRWQLALYLGDQNLLVNVLGAALLGFLSGLPAAPRRQLLLGIGFCGSVTTFSSWMLAAVKHLSAGDWAAALGLIGLTLGLGLGAAALGFNLGRRLKPPEPPQSPT.

4 helical membrane passes run 8-28 (LQLE…GALL), 41-61 (LLVN…PAAP), 66-86 (LLGI…LAAV), and 96-116 (AALG…ALGF). Residues glycine 73 and threonine 76 each contribute to the Na(+) site.

It belongs to the fluoride channel Fluc/FEX (TC 1.A.43) family.

Its subcellular location is the cell inner membrane. The catalysed reaction is fluoride(in) = fluoride(out). Na(+) is not transported, but it plays an essential structural role and its presence is essential for fluoride channel function. Its function is as follows. Fluoride-specific ion channel. Important for reducing fluoride concentration in the cell, thus reducing its toxicity. The chain is Fluoride-specific ion channel FluC 2 from Synechococcus sp. (strain CC9605).